Reading from the N-terminus, the 445-residue chain is E3 ubiquitin-protein ligase pellino homolog 3 (445 aa).

The interval 1 to 24 (MVLEGNPDVGSPRTSDLQHPGSQG) is disordered. Serine 11 is subject to Phosphoserine. The segment covering 12 to 24 (PRTSDLQHPGSQG) has biased composition (polar residues).

Belongs to the pellino family. In terms of assembly, interacts with TRAF6, MAP3K14 and MAP3K7. Post-translationally, phosphorylated by IRAK1 enhancing its E3 ligase activity.

It carries out the reaction S-ubiquitinyl-[E2 ubiquitin-conjugating enzyme]-L-cysteine + [acceptor protein]-L-lysine = [E2 ubiquitin-conjugating enzyme]-L-cysteine + N(6)-ubiquitinyl-[acceptor protein]-L-lysine.. It functions in the pathway protein modification; protein ubiquitination. E3 ubiquitin ligase catalyzing the covalent attachment of ubiquitin moieties onto substrate proteins. Involved in the TLR and IL-1 signaling pathways via interaction with the complex containing IRAK kinases and TRAF6. Mediates 'Lys-63'-linked polyubiquitination of IRAK1. Can activate AP1/JUN and ELK1. Acts as a regulator of innate immunity by mediating 'Lys-63'-linked polyubiquitination of RIPK2 downstream of NOD1 and NOD2, thereby transforming RIPK2 into a scaffolding protein for downstream effectors, ultimately leading to activation of the NF-kappa-B and MAP kinases signaling. Catalyzes 'Lys-63'-linked polyubiquitination of RIPK2 in parallel of XIAP. The chain is E3 ubiquitin-protein ligase pellino homolog 3 from Mus musculus (Mouse).